Reading from the N-terminus, the 990-residue chain is Serine/threonine-protein phosphatase 6 regulatory ankyrin repeat subunit B (990 aa).

ANK repeat units lie at residues 7 to 36, 40 to 69, 73 to 102, 106 to 135, 139 to 168, 172 to 201, 205 to 234, 238 to 267, 271 to 301, 305 to 334, 338 to 367, 371 to 400, 404 to 433, 437 to 466, 470 to 499, 531 to 560, 566 to 595, 599 to 628, 633 to 662, 666 to 695, 699 to 728, 732 to 761, 768 to 797, 800 to 829, 835 to 864, 868 to 898, 902 to 931, and 938 to 967; these read ADQP…DVNA, EKRT…RVNA, MWLT…DVNA, NWQT…SVNV, GGRT…NINA, KDRR…EVTC, KGYT…EIDE, YGNT…NVNQ, NGFT…DVNI, DGKS…EIDC, DGNT…DTAK, HNMF…EIDT, FGRT…DFNK, RGRT…NINE, WGRT…NAEE, EGYN…NMFE, ATKS…DLDI, KGRT…SVTV, TKRT…NPDV, KGQT…SVDA, LGCT…SILC, RGRT…SEED, QGYT…FRKF, NSFS…ASIV, KGRT…QVNA, AGKT…DLTL, DSNT…EQSL, and SLQT…CVLA.

Protein phosphatase 6 (PP6) holoenzyme is proposed to be a heterotrimeric complex formed by the catalytic subunit, a SAPS domain-containing subunit (PP6R) and an ankyrin repeat-domain containing regulatory subunit (ARS).

Functionally, putative regulatory subunit of protein phosphatase 6 (PP6) that may be involved in the recognition of phosphoprotein substrates. The polypeptide is Serine/threonine-protein phosphatase 6 regulatory ankyrin repeat subunit B (ANKRD44) (Gallus gallus (Chicken)).